The chain runs to 718 residues: Sodium/myo-inositol cotransporter (718 aa).

The Extracellular portion of the chain corresponds to 1–9 (MRAVLETAD). Residues 10–29 (IAIVALYFILVMCIGFFAMW) traverse the membrane as a helical segment. Residues 30–38 (KSNRSTVSG) are Cytoplasmic-facing. Residues 39-57 (YFLAGRSMTWVAIGASLFV) traverse the membrane as a helical segment. Over 58–86 (SNIGSEHFIGLAGSGAASGFAVGAWEFNA) the chain is Extracellular. Residues 87–110 (LLLLQLLGWVFIPIYIRSGVYTMP) traverse the membrane as a helical segment. At 111-123 (EYLSKRFGGHRIQ) the chain is on the cytoplasmic side. A helical transmembrane segment spans residues 124–144 (VYFAALSLILYIFTKLSVDLY). Topologically, residues 145–157 (SGALFIQESMGWN) are extracellular. Residues 158–183 (LYVSVILLIGMTALLTVTGGLVAVIY) traverse the membrane as a helical segment. At 184–186 (TDT) the chain is on the cytoplasmic side. A helical transmembrane segment spans residues 187 to 205 (LQALLMIVGALTLMVISMM). At 206–303 (EIGGFEEVKR…HAKGSTLMAG (98 aa)) the chain is on the extracellular side. N-linked (GlcNAc...) asparagine glycosylation is present at asparagine 232. The helical transmembrane segment at 304-324 (FLKLLPMFIIVVPGMISRILF) threads the bilayer. Topologically, residues 325-353 (ADDIACINPEHCMQVCGSRAGCSNIAYPR) are cytoplasmic. A helical membrane pass occupies residues 354–376 (LVMKLVPVGLRGLMMAVMIAALM). Residues 377–406 (SDLDSIFNSASTIFTLDVYKLIRKSASSRE) lie on the Extracellular side of the membrane. A helical transmembrane segment spans residues 407–430 (LMIVGRIFVAFMVVISIAWVPIIV). At 431–443 (EMQGGQMYLYIQE) the chain is on the cytoplasmic side. The chain crosses the membrane as a helical span at residues 444–462 (VADYLTPPVAALFLLAIFW). At 463 to 510 (KRCNEQGAFYGGMAGFILVVVRLTLAFAYRAPECDQPDNRPVFIKDIH) the chain is on the extracellular side. A helical transmembrane segment spans residues 511 to 532 (YMYVATALFWITGLITVIVSLL). At 533–695 (TPPPTKEQIR…QMLEEPPQVK (163 aa)) the chain is on the cytoplasmic side. Serine 594 and serine 632 each carry phosphoserine. Residues 696 to 716 (VILNIGLFGVCSLGIFMFVYF) traverse the membrane as a helical segment. Over 717–718 (SL) the chain is Extracellular.

It belongs to the sodium:solute symporter (SSF) (TC 2.A.21) family. As to quaternary structure, interacts with KCNQ2 (via the pore module). Interacts with KCNQ1; this interaction is direct. Forms coregulatory complexes with ion channels KCNQ2-KCNQ3 and KCNQ1-KCNE2.

It is found in the apical cell membrane. Its subcellular location is the basolateral cell membrane. In terms of biological role, electrogenic Na(+)-coupled sugar symporter that actively transports myo-inositol and its stereoisomer scyllo-inositol across the plasma membrane, with a Na(+) to sugar coupling ratio of 2:1. Maintains myo-inositol concentration gradient that defines cell volume and fluid balance during osmotic stress, in particular in the fetoplacental unit and central nervous system. Forms coregulatory complexes with voltage-gated K(+) ion channels, allosterically altering ion selectivity, voltage dependence and gating kinetics of the channel. In turn, K(+) efflux through the channel forms a local electrical gradient that modulates electrogenic Na(+)-coupled myo-inositol influx through the transporter. Associates with KCNQ1-KCNE2 channel in the apical membrane of choroid plexus epithelium and regulates the myo-inositol gradient between blood and cerebrospinal fluid with an impact on neuron excitability. Associates with KCNQ2-KCNQ3 channel altering ion selectivity, increasing Na(+) and Cs(+) permeation relative to K(+) permeation. Provides myo-inositol precursor for biosynthesis of phosphoinositides such as PI(4,5)P2, thus indirectly affecting the activity of phosphoinositide-dependent ion channels and Ca(2+) signaling upon osmotic stress. The protein is Sodium/myo-inositol cotransporter (SLC5A3) of Bos taurus (Bovine).